Reading from the N-terminus, the 262-residue chain is Dehydrin COR410 (262 aa).

Disordered regions lie at residues 1-153 and 187-262; these read MEDE…HDTD and LPGG…KPSA. Composition is skewed to basic and acidic residues over residues 34 to 45 and 53 to 74; these read KKAEEDKEKEEE and VSVEEPEVKKEEHEDGEKKETL. The span at 89–101 shows a compositional bias: acidic residues; sequence SDEEEEEVIDDNG. A run of 2 repeats spans residues 106-126 and 173-193. Residues 106-245 are 3 X 21 AA repeats, Lys-rich; it reads RKKKKGLKEK…MDKLPGYHKT (140 aa). Composition is skewed to basic and acidic residues over residues 113-130 and 187-196; these read KEKLQGKLPGHKDTEGEH and LPGGHKKPED. A compositionally biased stretch (low complexity) spans 197–209; sequence AAAVPVTHAAPAP. Copy 3 of the repeat occupies 225–245; sequence AKEKKGLLGKIMDKLPGYHKT. Basic and acidic residues predominate over residues 244 to 262; that stretch reads KTGEEDKAAAATGEHKPSA.

As to expression, expressed in roots, crown and leaves during cold acclimation.

This chain is Dehydrin COR410 (COR410), found in Triticum aestivum (Wheat).